The following is a 910-amino-acid chain: MQDKYNHTEVERAAHAHWNANDAYRVTEDQAKPKFYACSMLPYPSGKLHMGHVRNYTINDMLTRSLRMKGHNVLMPMGWDAFGLPAENAALKNGVPPAQWTYDNIAYMKKQMQAMGLAIDWSREIATCDPDYYKWNQWLFLKMLDKGIAYRKTQVVNWDPVDQTVLANEQVIDGRGWRTGALVEKREIPGYYLKITDYAQELLDHVQIGNEKATLTGWPDKVRLMQENWIGKSAGVRFAFPHDIRNAAGERIQDGKLYVFTTRADTIMGVTFCAVAPEHPLAQHAAASNAALAAFIEECKKGGTTEAELALKEKEGMPTGLFVTHPLTGEQVEVWVGNYVLMSYGDGAVMGVPAHDERDFAFALKYQLPIKQVVLVDGETFDFHQWQDWYGDKERGVTINSGNFSGLSYQDAVAAVAHALAEKGLGELKTTWRLRDWGISRQRYWGTPIPIIHCESCGAVPVPEKDLPVVLPQDLVPDGSGNPLAKCEAFLKVDCPCCGKPARRETDTMDTFVDSSWYFMRYCDPKNRDAMVAGGTDYWMRDQKAATGGSGMDQYIGGIEHAILHLLYARFWTKVMRDLGLVKVDEPFTKLLTQGMVLNHIYSRRTAKGAKDYFWPHDVEHVYDEAGKIVGAKLKNPAESGDGLLPVGTPIDYEGVGTMSKSKNNGVDPQQLIEKYGADTARLYTMFTAPPELTLEWNDAAVEGSYRFLRRVWNFGVKLSAIDKDAALASVAGAASLKDVQFGKEAKALRLEIHTVLKQVDYDYQRMQYNTVVSGAMKMINALEDFKATDSAGAQVALIEGFGILLRVLYPATPHIAHVLWDELGYAGTLGDLLDAAWPQVAPDALVQDELELMLQVNGKLRGAIRVAASADKAAIEQAALASEDFHKFAEGKAPKKVIIVPGRLVNVVV.

The 'HIGH' region motif lies at 42–52 (PYPSGKLHMGH). The 'KMSKS' region motif lies at 658–662 (TMSKS). Residue Lys661 coordinates ATP.

This sequence belongs to the class-I aminoacyl-tRNA synthetase family.

It is found in the cytoplasm. The enzyme catalyses tRNA(Leu) + L-leucine + ATP = L-leucyl-tRNA(Leu) + AMP + diphosphate. In Acidovorax sp. (strain JS42), this protein is Leucine--tRNA ligase.